Reading from the N-terminus, the 367-residue chain is Pantothenate kinase CAB1 (367 aa).

Belongs to the type II pantothenate kinase family.

The protein localises to the cytoplasm. Its subcellular location is the nucleus. The enzyme catalyses (R)-pantothenate + ATP = (R)-4'-phosphopantothenate + ADP + H(+). It participates in cofactor biosynthesis; coenzyme A biosynthesis; CoA from (R)-pantothenate: step 1/5. Its activity is regulated as follows. Regulated by feedback inhibition by malonyl-CoA. Functionally, plays a role in the physiological regulation of the intracellular CoA concentration. This Saccharomyces cerevisiae (strain ATCC 204508 / S288c) (Baker's yeast) protein is Pantothenate kinase CAB1 (CAB1).